Consider the following 201-residue polypeptide: ATP-dependent Clp protease proteolytic subunit (201 aa).

The active-site Nucleophile is the Ser-101. His-126 is an active-site residue.

This sequence belongs to the peptidase S14 family. As to quaternary structure, fourteen ClpP subunits assemble into 2 heptameric rings which stack back to back to give a disk-like structure with a central cavity, resembling the structure of eukaryotic proteasomes.

The protein resides in the cytoplasm. It catalyses the reaction Hydrolysis of proteins to small peptides in the presence of ATP and magnesium. alpha-casein is the usual test substrate. In the absence of ATP, only oligopeptides shorter than five residues are hydrolyzed (such as succinyl-Leu-Tyr-|-NHMec, and Leu-Tyr-Leu-|-Tyr-Trp, in which cleavage of the -Tyr-|-Leu- and -Tyr-|-Trp bonds also occurs).. Functionally, cleaves peptides in various proteins in a process that requires ATP hydrolysis. Has a chymotrypsin-like activity. Plays a major role in the degradation of misfolded proteins. The sequence is that of ATP-dependent Clp protease proteolytic subunit from Francisella tularensis subsp. tularensis (strain FSC 198).